A 134-amino-acid polypeptide reads, in one-letter code: NADPH-dependent 7-cyano-7-deazaguanine reductase (134 aa).

Catalysis depends on Cys-48, which acts as the Thioimide intermediate. Asp-55 (proton donor) is an active-site residue. Residues 70–72 and 89–90 each bind substrate; these read VEL and QE.

Belongs to the GTP cyclohydrolase I family. QueF type 1 subfamily.

The protein resides in the cytoplasm. It catalyses the reaction 7-aminomethyl-7-carbaguanine + 2 NADP(+) = 7-cyano-7-deazaguanine + 2 NADPH + 3 H(+). Its pathway is tRNA modification; tRNA-queuosine biosynthesis. Catalyzes the NADPH-dependent reduction of 7-cyano-7-deazaguanine (preQ0) to 7-aminomethyl-7-deazaguanine (preQ1). The protein is NADPH-dependent 7-cyano-7-deazaguanine reductase of Caldanaerobacter subterraneus subsp. tengcongensis (strain DSM 15242 / JCM 11007 / NBRC 100824 / MB4) (Thermoanaerobacter tengcongensis).